Here is a 187-residue protein sequence, read N- to C-terminus: Large ribosomal subunit protein uL5 (187 aa).

The protein belongs to the universal ribosomal protein uL5 family. As to quaternary structure, part of the 50S ribosomal subunit; part of the 5S rRNA/L5/L18/L25 subcomplex. Contacts the 5S rRNA and the P site tRNA. Forms a bridge to the 30S subunit in the 70S ribosome.

This is one of the proteins that bind and probably mediate the attachment of the 5S RNA into the large ribosomal subunit, where it forms part of the central protuberance. In the 70S ribosome it contacts protein S13 of the 30S subunit (bridge B1b), connecting the 2 subunits; this bridge is implicated in subunit movement. Contacts the P site tRNA; the 5S rRNA and some of its associated proteins might help stabilize positioning of ribosome-bound tRNAs. The protein is Large ribosomal subunit protein uL5 of Mycobacterium bovis (strain ATCC BAA-935 / AF2122/97).